The primary structure comprises 338 residues: MQAQMEDFKIKEEIWIEKYRPVRLNQVAGQEETIERLMSYVATKNLPHLLFSGPPGVGKTASAVSIAREIFGEDLWRENFTELNASDERGIDIVRNKIKNFAKTAPMGGAPFKIIFLDEADALTSDAQSALRRTMEKFSSNCRFILSCNYSSKIIEPIQSRCAVYRFRRLSDKAIRERLEYIAKEQDLSITDGGYEALIYVAQGDMRKAVNSLQAAAFIDVEKPISRETIYRTTATANPEEIKNLIETALRGNFRVARKELNRLLYEEGLSGEDIVGQIYRVVSEMDNLMILDLGLSERDIVGLVDIIGETDFRLTEGASEKIQLEALLAHFALSREE.

53–60 (GPPGVGKT) provides a ligand contact to ATP.

It belongs to the activator 1 small subunits family. RfcS subfamily. Heteromultimer composed of small subunits (RfcS) and large subunits (RfcL).

In terms of biological role, part of the RFC clamp loader complex which loads the PCNA sliding clamp onto DNA. This chain is Replication factor C small subunit, found in Methanosarcina mazei (strain ATCC BAA-159 / DSM 3647 / Goe1 / Go1 / JCM 11833 / OCM 88) (Methanosarcina frisia).